The following is a 5068-amino-acid chain: Protein piccolo (5068 aa).

A compositionally biased stretch (low complexity) spans 1-20; sequence MGNEASLEGEGLPEGLAAAA. Disordered stretches follow at residues 1-143 and 173-524; these read MGNE…DFKE and FDLI…QAPA. A compositionally biased stretch (pro residues) spans 93 to 102; it reads PGKPPDPGRP. 3 stretches are compositionally biased toward basic and acidic residues: residues 111-122, 133-143, and 185-199; these read RTTDTFRSEQKL, KESKSRTDFKE, and ETTK…DQGK. The residue at position 212 (Ser212) is a Phosphoserine. A compositionally biased stretch (polar residues) spans 232–241; it reads PSKSVSSQQA. Residues 252–279 are compositionally biased toward low complexity; the sequence is AKPSQQSPAQTPAQQAKPVAQQPGPAKA. Over residues 319–334 the composition is skewed to polar residues; it reads TSLQQPGPKSLAQTPG. 2 stretches are compositionally biased toward pro residues: residues 391–407 and 416–487; these read PTKP…PQPQ and PQQP…PQPQ. A 10 X 10 AA tandem approximate repeats of P-A-K-P-Q-P-Q-Q-P-X region spans residues 401–500; that stretch reads PAKPQPQQPV…LGKPSAQQPS (100 aa). The segment covering 495–508 has biased composition (polar residues); the sequence is SAQQPSKSISQTVT. Low complexity predominate over residues 515–524; the sequence is PPTSAAQAPA. The segment at 532–556 adopts a C4-type zinc-finger fold; the sequence is CPLCNTTELLLHTPEKANFNTCTEC. Disordered stretches follow at residues 594–867, 883–1005, 1057–1345, and 1364–1803; these read AAIP…TVTG, LIST…TELN, LGDM…PSDL, and VGEK…SDPE. The span at 610 to 625 shows a compositional bias: polar residues; the sequence is QPATASKSPVPSQQAS. Over residues 626 to 644 the composition is skewed to basic and acidic residues; sequence PKKELPSKQDSPKAPESKK. The span at 709–738 shows a compositional bias: low complexity; the sequence is SPSSAAATSKPAILSSQVQAQAQVTTAPPL. Basic and acidic residues predominate over residues 782–795; that stretch reads ESKDPVQKKEEPKK. Low complexity predominate over residues 809–830; that stretch reads VPKGSPTPSGTRPTTGQATPQS. Phosphoserine is present on residues Ser844 and Ser856. 2 stretches are compositionally biased toward polar residues: residues 856–865 and 883–893; these read SQPTTPQETV and LISTAGQQAPH. The residue at position 860 (Thr860) is a Phosphothreonine. The C4-type zinc finger occupies 997 to 1020; the sequence is CPLCRTELNVGSQDPPNFNTCTEC. Over residues 1073–1085 the composition is skewed to pro residues; that stretch reads SPVPAPAEPPPQK. A compositionally biased stretch (basic and acidic residues) spans 1097 to 1116; it reads KETEVKAETEKQIPEKETPS. At Thr1120 the chain carries Phosphothreonine. Basic and acidic residues-rich tracts occupy residues 1144-1165, 1172-1186, 1244-1253, and 1262-1283; these read PEKK…KKPP, LEEK…KLPP, PKDRQKESRD, and TAKE…DKSD. The span at 1290–1306 shows a compositional bias: polar residues; the sequence is PKSPQGLSDTGYSSDGI. Residues Ser1292, Ser1302, Ser1303, Ser1332, Ser1334, Ser1337, Ser1338, and Ser1341 each carry the phosphoserine modification. The span at 1319–1333 shows a compositional bias: basic and acidic residues; the sequence is SDEKDLLKGLKKDSF. Residues 1334-1343 are compositionally biased toward low complexity; it reads SQESSPSSPS. Residues 1374 to 1392 are compositionally biased toward polar residues; the sequence is PQKVSPEQPQDQQKTQTPS. Basic and acidic residues predominate over residues 1405–1444; it reads KESQEKKVTSKKDSAQGFPSRKEHKENPELVDDLSPRRAS. Residues Ser1439, Ser1451, Ser1452, Ser1454, Ser1457, Ser1481, Ser1484, Ser1505, and Ser1507 each carry the phosphoserine modification. The span at 1499 to 1511 shows a compositional bias: acidic residues; sequence SADEDASGSEDEE. Position 1552 is a phosphothreonine (Thr1552). A phosphoserine mark is found at Ser1553, Ser1563, and Ser1575. Over residues 1566 to 1575 the composition is skewed to acidic residues; it reads DEDDETFDES. A compositionally biased stretch (basic and acidic residues) spans 1576 to 1587; it reads PELKFRETKSQE. Positions 1606–1624 are enriched in polar residues; that stretch reads ELNSTVTDKYSAESSQKKT. Residues 1628–1638 are compositionally biased toward acidic residues; sequence FDEEPELEMES. Phosphoserine is present on Ser1638. Position 1640 is a phosphothreonine (Thr1640). Ser1642 and Ser1647 each carry phosphoserine. The span at 1650–1667 shows a compositional bias: polar residues; that stretch reads EGSSSLHASSFTPGTSPT. Over residues 1707-1720 the composition is skewed to acidic residues; the sequence is DSSEEEELREEEEL. Residues Ser1708 and Ser1709 each carry the phosphoserine modification. Over residues 1721–1734 the composition is skewed to basic and acidic residues; sequence LKEQEKQRELEQQQ. The residue at position 1760 (Thr1760) is a Phosphothreonine. Ser1766 bears the Phosphoserine mark. Positions 1775 to 1790 are enriched in basic and acidic residues; the sequence is EELRQAAEMEELHRSS. Residues Ser1795, Ser1800, Ser1808, and Ser1829 each carry the phosphoserine modification. 2 disordered regions span residues 2104–2126 and 2261–2377; these read PSES…ISSV and EAEL…AAAA. Residues 2109-2126 show a composition bias toward low complexity; sequence TSVPPSDTPSLTSSISSV. The segment covering 2277–2291 has biased composition (polar residues); that stretch reads TPSSQTKEQPGSPHS. The span at 2334–2368 shows a compositional bias: pro residues; that stretch reads QPPPPPPPPPPPPPPPPPPPPPPLPPATSPKPPTY. Position 2495 is a phosphoserine (Ser2495). The O-linked (GlcNAc) threonine glycan is linked to Thr2686. Ser2960 carries O-linked (GlcNAc) serine glycosylation. The residue at position 2998 (Thr2998) is a Phosphothreonine. Disordered regions lie at residues 3334-3443 and 3490-3556; these read KEEK…SKVS and KGGS…LYSP. Ser3358 carries the phosphoserine modification. The segment covering 3361–3370 has biased composition (basic and acidic residues); sequence DDPRNLKKIV. A Phosphoserine modification is found at Ser3372. Thr3376 and Thr3403 each carry phosphothreonine. The segment covering 3403–3412 has biased composition (acidic residues); that stretch reads TDDEDQDEWD. Over residues 3495 to 3507 the composition is skewed to polar residues; sequence GCQTETDPDTQSP. Phosphoserine is present on residues Ser3506, Ser3514, Ser3545, Ser3549, Ser3555, Ser3558, Ser3561, Ser3582, Ser3608, Ser3610, and Ser3616. Disordered regions lie at residues 3576 to 3679 and 3760 to 3797; these read PLPD…RRRM and DYMS…QFIP. 2 stretches are compositionally biased toward polar residues: residues 3636 to 3645 and 3661 to 3673; these read KGSQTTSGTQ and STGT…TMGT. Phosphoserine is present on Ser3763. The segment covering 3773 to 3785 has biased composition (basic and acidic residues); sequence SRVESQHGIERPR. The segment covering 3787–3797 has biased composition (polar residues); that stretch reads APQTEFSQFIP. Phosphoserine is present on residues Ser4016, Ser4042, and Ser4132. Disordered stretches follow at residues 4207–4231 and 4254–4273; these read ADKP…GLDL and VSFG…LPIS. Positions 4210-4231 are enriched in low complexity; sequence PYSSGSRSRPSSRPSSVYGLDL. Residues 4257-4273 are compositionally biased toward polar residues; it reads GHSSSSARTKPTSLPIS. Residues Ser4286, Ser4290, Ser4293, Ser4322, and Ser4358 each carry the phosphoserine modification. Residues 4317-4339 form a disordered region; that stretch reads RDQFGSSHSLPEVQQHMREESRT. The PDZ domain maps to 4424-4518; it reads RIKITRDSKD…EAEICVRLDL (95 aa). A disordered region spans residues 4574 to 4620; that stretch reads KGAHAHSGPTSAGSSSVPSPGQPGSPSVSKKKHGGSKPTDVSKTASH. Low complexity predominate over residues 4578–4601; the sequence is AHSGPTSAGSSSVPSPGQPGSPSV. Position 4592 is a phosphoserine (Ser4592). Residues 4622–4751 enclose the C2 1 domain; sequence ITGEIQLQIN…SHLDNTPRWY (130 aa). Positions 4651 and 4657 each coordinate Ca(2+). At Ser4706 the chain carries Phosphoserine. The Ca(2+) site is built by Asp4721, Asp4723, Ser4726, and Asp4729. 2 disordered regions span residues 4758–4834 and 4857–4891; these read ESIE…SVAQ and QPTK…SEGS. Low complexity-rich tracts occupy residues 4766–4778 and 4805–4815; these read HSSQ…PKPS and SSPGSSKSSSE. The segment covering 4823–4834 has biased composition (polar residues); that stretch reads PSRSQSKTSVAQ. Positions 4870–4891 are enriched in low complexity; the sequence is SVSTGSSGSSVGSGYSVDSEGS. The C2 2 domain occupies 4933-5058; that stretch reads VMGEIKLALK…DLRKRIVNWH (126 aa).

In terms of assembly, interacts with BSN, ERC2/CAST1, RIMS1 and UNC13A. Interacts (via C-terminus) with TRIO (via N-terminus). Interacts with CTBP1. Interacts with SIAH1; this interaction negatively regulates SIAH1 E3 ligase activity. Directly interacts with GIT1 and GIT2. Ca(2+) serves as cofactor. Highly expressed in brain. Moderately expressed in pituitary gland and pancreatic islets. Low levels found in stomach.

The protein resides in the presynaptic active zone. Its function is as follows. Scaffold protein of the presynaptic cytomatrix at the active zone (CAZ) which is the place in the synapse where neurotransmitter is released. After synthesis, participates in the formation of Golgi-derived membranous organelles termed Piccolo-Bassoon transport vesicles (PTVs) that are transported along axons to sites of nascent synaptic contacts. At the presynaptic active zone, regulates the spatial organization of synaptic vesicle cluster, the protein complexes that execute membrane fusion and compensatory endocytosis. Organizes as well the readily releasable pool of synaptic vesicles and safeguards a fraction of them to be not immediately available for action potential-induced release. Also functions in processes other than assembly such as the regulation of specific presynaptic protein ubiquitination by interacting with SIAH1 or the regulation of presynaptic autophagy. Also mediates synapse to nucleus communication leading to reconfiguration of gene expression by associating with the transcriptional corepressor CTBP1 and by subsequently reducing the size of its pool available for nuclear import. This chain is Protein piccolo, found in Mus musculus (Mouse).